The primary structure comprises 184 residues: Ubiquitin-conjugating enzyme E2-23 kDa (184 aa).

Residues 1 to 148 form the UBC core domain; that stretch reads MSSPSKRREM…VKEYCERYAK (148 aa). Residue cysteine 85 is the Glycyl thioester intermediate of the active site. A disordered region spans residues 146–184; that stretch reads YAKPEDISPEEEEEESDEELSDAEGYDSGDEAIMGHADP. Over residues 152 to 175 the composition is skewed to acidic residues; that stretch reads ISPEEEEEESDEELSDAEGYDSGD.

It belongs to the ubiquitin-conjugating enzyme family.

It carries out the reaction S-ubiquitinyl-[E1 ubiquitin-activating enzyme]-L-cysteine + [E2 ubiquitin-conjugating enzyme]-L-cysteine = [E1 ubiquitin-activating enzyme]-L-cysteine + S-ubiquitinyl-[E2 ubiquitin-conjugating enzyme]-L-cysteine.. It functions in the pathway protein modification; protein ubiquitination. In terms of biological role, catalyzes the covalent attachment of ubiquitin to other proteins. This is Ubiquitin-conjugating enzyme E2-23 kDa (UBC4) from Triticum aestivum (Wheat).